The chain runs to 89 residues: Small ribosomal subunit protein uS15 (89 aa).

Over residues 1–21 (MAISQERKNEIIKEYARHEGD) the composition is skewed to basic and acidic residues. The disordered stretch occupies residues 1-24 (MAISQERKNEIIKEYARHEGDTGS).

Belongs to the universal ribosomal protein uS15 family. Part of the 30S ribosomal subunit. Forms a bridge to the 50S subunit in the 70S ribosome, contacting the 23S rRNA.

One of the primary rRNA binding proteins, it binds directly to 16S rRNA where it helps nucleate assembly of the platform of the 30S subunit by binding and bridging several RNA helices of the 16S rRNA. Functionally, forms an intersubunit bridge (bridge B4) with the 23S rRNA of the 50S subunit in the ribosome. The protein is Small ribosomal subunit protein uS15 of Enterococcus faecalis (strain ATCC 700802 / V583).